The primary structure comprises 735 residues: Phosphoribosylformylglycinamidine synthase subunit PurL (735 aa).

Residue His49 is part of the active site. 2 residues coordinate ATP: Tyr52 and Lys91. Glu93 is a binding site for Mg(2+). Residues 94–97 (SHNH) and Arg116 each bind substrate. Catalysis depends on His95, which acts as the Proton acceptor. Residue Asp117 coordinates Mg(2+). Gln240 provides a ligand contact to substrate. Asp268 serves as a coordination point for Mg(2+). Substrate is bound at residue 312–314 (ESQ). ATP is bound by residues Asp493 and Gly530. Asn531 is a Mg(2+) binding site. A substrate-binding site is contributed by Ser533.

It belongs to the FGAMS family. Monomer. Part of the FGAM synthase complex composed of 1 PurL, 1 PurQ and 2 PurS subunits.

Its subcellular location is the cytoplasm. It catalyses the reaction N(2)-formyl-N(1)-(5-phospho-beta-D-ribosyl)glycinamide + L-glutamine + ATP + H2O = 2-formamido-N(1)-(5-O-phospho-beta-D-ribosyl)acetamidine + L-glutamate + ADP + phosphate + H(+). Its pathway is purine metabolism; IMP biosynthesis via de novo pathway; 5-amino-1-(5-phospho-D-ribosyl)imidazole from N(2)-formyl-N(1)-(5-phospho-D-ribosyl)glycinamide: step 1/2. Its function is as follows. Part of the phosphoribosylformylglycinamidine synthase complex involved in the purines biosynthetic pathway. Catalyzes the ATP-dependent conversion of formylglycinamide ribonucleotide (FGAR) and glutamine to yield formylglycinamidine ribonucleotide (FGAM) and glutamate. The FGAM synthase complex is composed of three subunits. PurQ produces an ammonia molecule by converting glutamine to glutamate. PurL transfers the ammonia molecule to FGAR to form FGAM in an ATP-dependent manner. PurS interacts with PurQ and PurL and is thought to assist in the transfer of the ammonia molecule from PurQ to PurL. The polypeptide is Phosphoribosylformylglycinamidine synthase subunit PurL (Azorhizobium caulinodans (strain ATCC 43989 / DSM 5975 / JCM 20966 / LMG 6465 / NBRC 14845 / NCIMB 13405 / ORS 571)).